The sequence spans 417 residues: NADH-quinone oxidoreductase subunit D (417 aa).

The protein belongs to the complex I 49 kDa subunit family. In terms of assembly, NDH-1 is composed of 14 different subunits. Subunits NuoB, C, D, E, F, and G constitute the peripheral sector of the complex.

The protein localises to the cell inner membrane. It carries out the reaction a quinone + NADH + 5 H(+)(in) = a quinol + NAD(+) + 4 H(+)(out). Functionally, NDH-1 shuttles electrons from NADH, via FMN and iron-sulfur (Fe-S) centers, to quinones in the respiratory chain. The immediate electron acceptor for the enzyme in this species is believed to be ubiquinone. Couples the redox reaction to proton translocation (for every two electrons transferred, four hydrogen ions are translocated across the cytoplasmic membrane), and thus conserves the redox energy in a proton gradient. This is NADH-quinone oxidoreductase subunit D from Francisella tularensis subsp. holarctica (strain FTNF002-00 / FTA).